Here is a 112-residue protein sequence, read N- to C-terminus: Putative transmembrane protein ORF112 (112 aa).

3 helical membrane passes run 26 to 46 (FWEV…GILV), 50 to 70 (ILVT…MYLF), and 80 to 100 (IFFP…LVGV).

It localises to the host membrane. The polypeptide is Putative transmembrane protein ORF112 (Acidianus convivator (ABV)).